Consider the following 408-residue polypeptide: LL-diaminopimelate aminotransferase (408 aa).

Positions 15 and 42 each coordinate substrate. Residues tyrosine 72, 108–109, tyrosine 132, asparagine 187, tyrosine 218, and 246–248 each bind pyridoxal 5'-phosphate; these read SK and SFS. Residues lysine 109, tyrosine 132, and asparagine 187 each contribute to the substrate site. Lysine 249 carries the post-translational modification N6-(pyridoxal phosphate)lysine. The pyridoxal 5'-phosphate site is built by arginine 257 and asparagine 292. Residues asparagine 292 and arginine 388 each coordinate substrate.

The protein belongs to the class-I pyridoxal-phosphate-dependent aminotransferase family. LL-diaminopimelate aminotransferase subfamily. As to quaternary structure, homodimer. Pyridoxal 5'-phosphate serves as cofactor.

It catalyses the reaction (2S,6S)-2,6-diaminopimelate + 2-oxoglutarate = (S)-2,3,4,5-tetrahydrodipicolinate + L-glutamate + H2O + H(+). Its pathway is amino-acid biosynthesis; L-lysine biosynthesis via DAP pathway; LL-2,6-diaminopimelate from (S)-tetrahydrodipicolinate (aminotransferase route): step 1/1. In terms of biological role, involved in the synthesis of meso-diaminopimelate (m-DAP or DL-DAP), required for both lysine and peptidoglycan biosynthesis. Catalyzes the direct conversion of tetrahydrodipicolinate to LL-diaminopimelate. In Synechococcus sp. (strain CC9902), this protein is LL-diaminopimelate aminotransferase.